We begin with the raw amino-acid sequence, 282 residues long: RsbT co-antagonist protein RsbRC (282 aa).

Phosphoserine occurs at positions 165 and 174. Residues S165–D276 form the STAS domain. The residue at position 186 (T186) is a Phosphothreonine.

In terms of assembly, probably present in the stressosome with RsbRA, RsbRB, RsbRD and RsbS. Phosphorylated by RsbT.

One of 4 functionally non-identical RsbR paralogs, it functions in the environmental signaling branch of the general stress response. Functionally, negative regulator of sigma-B activity. Non-phosphorylated RsbS binds to RsbT, preventing its association with RsbU. Requires any one of RsbRA, RsbRB, RsbRC or RsbRD to sequester RsbT. When RsbS and the RsbR paralog(s) are phosphorylated, they release RsbT, which can then bind and activate RsbU. The chain is RsbT co-antagonist protein RsbRC (rsbRC) from Bacillus subtilis (strain 168).